A 476-amino-acid chain; its full sequence is Glycogen synthase (476 aa).

Residue Lys-15 participates in ADP-alpha-D-glucose binding.

It belongs to the glycosyltransferase 1 family. Bacterial/plant glycogen synthase subfamily.

It carries out the reaction [(1-&gt;4)-alpha-D-glucosyl](n) + ADP-alpha-D-glucose = [(1-&gt;4)-alpha-D-glucosyl](n+1) + ADP + H(+). It participates in glycan biosynthesis; glycogen biosynthesis. Its function is as follows. Synthesizes alpha-1,4-glucan chains using ADP-glucose. The chain is Glycogen synthase from Actinobacillus succinogenes (strain ATCC 55618 / DSM 22257 / CCUG 43843 / 130Z).